The primary structure comprises 217 residues: Small ribosomal subunit protein uS3 (217 aa).

A KH type-2 domain is found at 40–110; it reads IRDLINKGFN…EVYINIHEVR (71 aa).

It belongs to the universal ribosomal protein uS3 family. In terms of assembly, part of the 30S ribosomal subunit. Forms a tight complex with proteins S10 and S14.

Binds the lower part of the 30S subunit head. Binds mRNA in the 70S ribosome, positioning it for translation. This Rickettsia akari (strain Hartford) protein is Small ribosomal subunit protein uS3.